The primary structure comprises 303 residues: 2-dehydropantoate 2-reductase (303 aa).

NADP(+) contacts are provided by residues 7–12, N98, and A122; that span reads GCGALG. Residue N98 participates in substrate binding. The active-site Proton donor is K176. Residues N180, N184, N194, and S244 each coordinate substrate. An NADP(+)-binding site is contributed by E256.

Belongs to the ketopantoate reductase family. Monomer.

Its subcellular location is the cytoplasm. The enzyme catalyses (R)-pantoate + NADP(+) = 2-dehydropantoate + NADPH + H(+). It participates in cofactor biosynthesis; (R)-pantothenate biosynthesis; (R)-pantoate from 3-methyl-2-oxobutanoate: step 2/2. Functionally, catalyzes the NADPH-dependent reduction of ketopantoate into pantoic acid. Has a strong preference for NADPH over NADH as the electron acceptor. Pantoate, ketoisovalerate, oxaloacetate, pyruvate, 3-hydroxypyruvate, alpha-ketoglutarate, alpha-ketobutyrate, and acetaldehyde cannot serve as substrates for reduction. The protein is 2-dehydropantoate 2-reductase of Salmonella typhimurium (strain LT2 / SGSC1412 / ATCC 700720).